We begin with the raw amino-acid sequence, 572 residues long: Proline--tRNA ligase (572 aa).

It belongs to the class-II aminoacyl-tRNA synthetase family. ProS type 1 subfamily. Homodimer.

The protein resides in the cytoplasm. It catalyses the reaction tRNA(Pro) + L-proline + ATP = L-prolyl-tRNA(Pro) + AMP + diphosphate. In terms of biological role, catalyzes the attachment of proline to tRNA(Pro) in a two-step reaction: proline is first activated by ATP to form Pro-AMP and then transferred to the acceptor end of tRNA(Pro). As ProRS can inadvertently accommodate and process non-cognate amino acids such as alanine and cysteine, to avoid such errors it has two additional distinct editing activities against alanine. One activity is designated as 'pretransfer' editing and involves the tRNA(Pro)-independent hydrolysis of activated Ala-AMP. The other activity is designated 'posttransfer' editing and involves deacylation of mischarged Ala-tRNA(Pro). The misacylated Cys-tRNA(Pro) is not edited by ProRS. The sequence is that of Proline--tRNA ligase from Yersinia pseudotuberculosis serotype O:1b (strain IP 31758).